Here is a 427-residue protein sequence, read N- to C-terminus: Protein phosphatase methylesterase 1 (427 aa).

The interval 1 to 49 (MSELQKSFAKAKLAKLPPEAPPFSMHPPRDEDDSESASSTGTVVPSPSR) is disordered. Positions 36 to 49 (SASSTGTVVPSPSR) are enriched in polar residues. Residues Ser-207, Asp-233, and His-364 contribute to the active site. The interval 402-427 (SAAMKQGAEAGAVPPFGRGQGSSHKP) is disordered.

Belongs to the AB hydrolase superfamily.

It catalyses the reaction [phosphatase 2A protein]-C-terminal L-leucine methyl ester + H2O = [phosphatase 2A protein]-C-terminal L-leucine + methanol + H(+). In terms of biological role, demethylates proteins that have been reversibly carboxymethylated. Demethylates the phosphatase PP2A catalytic subunit. In Aspergillus oryzae (strain ATCC 42149 / RIB 40) (Yellow koji mold), this protein is Protein phosphatase methylesterase 1 (ppe1).